A 214-amino-acid polypeptide reads, in one-letter code: Putative F-box protein At5g15670 (214 aa).

The F-box domain occupies 22-68; sequence RNKFDEIPHDLVIEILGRLPAKSVARFLTVSKLWATSIRSLDFIKSY.

The polypeptide is Putative F-box protein At5g15670 (Arabidopsis thaliana (Mouse-ear cress)).